Here is a 196-residue protein sequence, read N- to C-terminus: Molybdopterin synthase catalytic subunit (196 aa).

Substrate is bound by residues 110 to 111 (HR), Lys-126, and 133 to 135 (KKE). The tract at residues 142-196 (GGIWRANRDGAVGERVDEDEEKKKPDMGPHGPILRPSRPGERGHGPVVRNHQLGS) is disordered. The span at 147 to 168 (ANRDGAVGERVDEDEEKKKPDM) shows a compositional bias: basic and acidic residues.

It belongs to the MoaE family. MOCS2B subfamily. In terms of assembly, heterotetramer; composed of 2 small (MOCS2A) and 2 large (MOCS2B) subunits.

The protein resides in the cytoplasm. The catalysed reaction is 2 [molybdopterin-synthase sulfur-carrier protein]-C-terminal-Gly-aminoethanethioate + cyclic pyranopterin phosphate + H2O = molybdopterin + 2 [molybdopterin-synthase sulfur-carrier protein]-C-terminal Gly-Gly + 2 H(+). It functions in the pathway cofactor biosynthesis; molybdopterin biosynthesis. Its function is as follows. Catalytic subunit of the molybdopterin synthase complex, a complex that catalyzes the conversion of precursor Z into molybdopterin. Acts by mediating the incorporation of 2 sulfur atoms from thiocarboxylated MOCS2A into precursor Z to generate a dithiolene group. The protein is Molybdopterin synthase catalytic subunit of Sclerotinia sclerotiorum (strain ATCC 18683 / 1980 / Ss-1) (White mold).